Consider the following 845-residue polypeptide: Taste receptor type 1 member 3 (845 aa).

A signal peptide spans 1–18 (MAGLMLLSLMALLGLGAG). The Extracellular segment spans residues 19–568 (APLCLSRQLR…FLAWGQPAVL (550 aa)). Residues N128 and N262 are each glycosylated (N-linked (GlcNAc...) asparagine). Residues 569–589 (VLLILLALALGLVLVALGLFI) traverse the membrane as a helical segment. Topologically, residues 590-601 (RHRDSPLVQASG) are cytoplasmic. A helical membrane pass occupies residues 602–622 (GPRACFGLACLGLVCLSVLLF). Residues 623 to 637 (PGQPGPASCLAQQPL) lie on the Extracellular side of the membrane. Residues 638-658 (LHLPLTGCLSTLFLQAAQIFV) traverse the membrane as a helical segment. At 659–680 (GSELPSSWADQLRRCLQGPWAW) the chain is on the cytoplasmic side. Residues 681-701 (LLVLLALLAEAALCAWYLVAF) form a helical membrane-spanning segment. At 702–727 (PPEVVTDWWVLPTQVLVHCRMRSWIS) the chain is on the extracellular side. Residues 728-748 (FGLLHAINAMLAFLCFLGTFL) traverse the membrane as a helical segment. Topologically, residues 749-760 (VQSRPGRYNGAR) are cytoplasmic. The helical transmembrane segment at 761–781 (GLTFAMLAYFITWISFVPLFA) threads the bilayer. At 782-789 (NVHVAYQP) the chain is on the extracellular side. A helical membrane pass occupies residues 790–810 (TVQMAAILLCALGILATFHLP). The Cytoplasmic portion of the chain corresponds to 811–845 (KCYLLLQQLELNNPEFFLGDDARGQGSSGSGGKET).

The protein belongs to the G-protein coupled receptor 3 family. TAS1R subfamily. In terms of assembly, forms homodimers or heterodimers with TAS1R1 and TAS1R2.

The protein localises to the cell membrane. Putative taste receptor. TAS1R1/TAS1R3 responds to the umami taste stimulus (the taste of monosodium glutamate). TAS1R2/TAS1R3 recognizes diverse natural and synthetic sweeteners. TAS1R3 is essential for the recognition and response to the disaccharide trehalose. Sequence differences within and between species can significantly influence the selectivity and specificity of taste responses. The polypeptide is Taste receptor type 1 member 3 (TAS1R3) (Canis lupus familiaris (Dog)).